The chain runs to 332 residues: tRNA dimethylallyltransferase 2 (332 aa).

Residue G15–T22 participates in ATP binding. Residue T17–T22 participates in substrate binding. Interaction with substrate tRNA regions lie at residues D40–M43 and Q164–R168.

This sequence belongs to the IPP transferase family. In terms of assembly, monomer. The cofactor is Mg(2+).

The catalysed reaction is adenosine(37) in tRNA + dimethylallyl diphosphate = N(6)-dimethylallyladenosine(37) in tRNA + diphosphate. Functionally, catalyzes the transfer of a dimethylallyl group onto the adenine at position 37 in tRNAs that read codons beginning with uridine, leading to the formation of N6-(dimethylallyl)adenosine (i(6)A). The polypeptide is tRNA dimethylallyltransferase 2 (Hahella chejuensis (strain KCTC 2396)).